We begin with the raw amino-acid sequence, 889 residues long: Alanine--tRNA ligase (889 aa).

Zn(2+)-binding residues include His574, His578, Cys676, and His680.

Belongs to the class-II aminoacyl-tRNA synthetase family. Zn(2+) serves as cofactor.

Its subcellular location is the cytoplasm. The enzyme catalyses tRNA(Ala) + L-alanine + ATP = L-alanyl-tRNA(Ala) + AMP + diphosphate. Its function is as follows. Catalyzes the attachment of alanine to tRNA(Ala) in a two-step reaction: alanine is first activated by ATP to form Ala-AMP and then transferred to the acceptor end of tRNA(Ala). Also edits incorrectly charged Ser-tRNA(Ala) and Gly-tRNA(Ala) via its editing domain. The sequence is that of Alanine--tRNA ligase from Thermobifida fusca (strain YX).